The primary structure comprises 283 residues: 2-dehydro-3-deoxyphosphooctonate aldolase (283 aa).

The protein belongs to the KdsA family.

The protein localises to the cytoplasm. It catalyses the reaction D-arabinose 5-phosphate + phosphoenolpyruvate + H2O = 3-deoxy-alpha-D-manno-2-octulosonate-8-phosphate + phosphate. Its pathway is carbohydrate biosynthesis; 3-deoxy-D-manno-octulosonate biosynthesis; 3-deoxy-D-manno-octulosonate from D-ribulose 5-phosphate: step 2/3. It functions in the pathway bacterial outer membrane biogenesis; lipopolysaccharide biosynthesis. The protein is 2-dehydro-3-deoxyphosphooctonate aldolase of Shewanella frigidimarina (strain NCIMB 400).